The following is a 96-amino-acid chain: Plasminogen-like protein B (96 aa).

The signal sequence occupies residues 1 to 19 (MEHKEVVLLLLLFLKSGQG). The PAN domain occupies 20 to 96 (EPLDDYVNTQ…RMRDAVLFEK (77 aa)). Intrachain disulfides connect C49/C73 and C53/C61.

The protein localises to the secreted. May bind noncovalently to lysine binding sites present in the kringle structures of plasminogen. This may interfere with the binding of fibrin or alpha-2-antiplasmin to plasminogen and may result in the localization of activity at sites necessary for extracellular matrix destruction. In Homo sapiens (Human), this protein is Plasminogen-like protein B (PLGLB1).